Reading from the N-terminus, the 161-residue chain is Protein UXT homolog (161 aa).

It belongs to the UXT family.

The sequence is that of Protein UXT homolog from Dictyostelium discoideum (Social amoeba).